Consider the following 198-residue polypeptide: Nucleoside triphosphate pyrophosphatase (198 aa).

Residue aspartate 74 is the Proton acceptor of the active site.

This sequence belongs to the Maf family. A divalent metal cation serves as cofactor.

Its subcellular location is the cytoplasm. It carries out the reaction a ribonucleoside 5'-triphosphate + H2O = a ribonucleoside 5'-phosphate + diphosphate + H(+). The enzyme catalyses a 2'-deoxyribonucleoside 5'-triphosphate + H2O = a 2'-deoxyribonucleoside 5'-phosphate + diphosphate + H(+). Functionally, nucleoside triphosphate pyrophosphatase. May have a dual role in cell division arrest and in preventing the incorporation of modified nucleotides into cellular nucleic acids. This is Nucleoside triphosphate pyrophosphatase from Sphingopyxis alaskensis (strain DSM 13593 / LMG 18877 / RB2256) (Sphingomonas alaskensis).